A 367-amino-acid chain; its full sequence is Peptidyl-prolyl cis-trans isomerase D (367 aa).

Residues 7–171 enclose the PPIase cyclophilin-type domain; it reads FFEVAIGGKT…QPVTIVDCGE (165 aa). 3 TPR repeats span residues 213–246, 264–297, and 302–335; these read IEKL…LEDY, ISCY…ETVA, and AKAL…EPAD.

The protein belongs to the cyclophilin-type PPIase family. PPIase D subfamily.

The protein resides in the cytoplasm. The enzyme catalyses [protein]-peptidylproline (omega=180) = [protein]-peptidylproline (omega=0). PPIases accelerate the folding of proteins. It catalyzes the cis-trans isomerization of proline imidic peptide bonds in oligopeptides. This chain is Peptidyl-prolyl cis-trans isomerase D (CPR6), found in Yarrowia lipolytica (strain CLIB 122 / E 150) (Yeast).